The primary structure comprises 397 residues: 1-deoxy-D-xylulose 5-phosphate reductoisomerase (397 aa).

6 residues coordinate NADPH: threonine 17, glycine 18, serine 19, isoleucine 20, asparagine 47, and asparagine 130. Lysine 131 serves as a coordination point for 1-deoxy-D-xylulose 5-phosphate. Glutamate 132 serves as a coordination point for NADPH. Mn(2+) is bound at residue aspartate 156. Residues serine 157, glutamate 158, serine 182, and histidine 205 each coordinate 1-deoxy-D-xylulose 5-phosphate. A Mn(2+)-binding site is contributed by glutamate 158. Glycine 211 lines the NADPH pocket. 1-deoxy-D-xylulose 5-phosphate is bound by residues serine 218, asparagine 223, lysine 224, and glutamate 227. Mn(2+) is bound at residue glutamate 227.

This sequence belongs to the DXR family. The cofactor is Mg(2+). Requires Mn(2+) as cofactor.

It catalyses the reaction 2-C-methyl-D-erythritol 4-phosphate + NADP(+) = 1-deoxy-D-xylulose 5-phosphate + NADPH + H(+). Its pathway is isoprenoid biosynthesis; isopentenyl diphosphate biosynthesis via DXP pathway; isopentenyl diphosphate from 1-deoxy-D-xylulose 5-phosphate: step 1/6. Catalyzes the NADPH-dependent rearrangement and reduction of 1-deoxy-D-xylulose-5-phosphate (DXP) to 2-C-methyl-D-erythritol 4-phosphate (MEP). The polypeptide is 1-deoxy-D-xylulose 5-phosphate reductoisomerase (Allorhizobium ampelinum (strain ATCC BAA-846 / DSM 112012 / S4) (Agrobacterium vitis (strain S4))).